A 147-amino-acid polypeptide reads, in one-letter code: MARPTKFRRVEFFPEDNYFVPWGKPKCQIEEMVLKVEELEAMRLKDIEKLNQEECAQKMEVSRQTFQNIIDSARNKVAIALTEGKAIKISGGNYTTKLCKYRCLDCENIYEINYKQDRDTCPACGSEKIVCSRKADFCRRWCKGHNK.

It belongs to the UPF0251 family.

The chain is UPF0251 protein CTC_01373 from Clostridium tetani (strain Massachusetts / E88).